Consider the following 215-residue polypeptide: Small ribosomal subunit protein uS5 (215 aa).

The tract at residues 1–62 (MTDSSPQSNP…QERDSEWQER (62 aa)) is disordered. Residues 9 to 28 (NPNAVPGAADVPAAAEGQQQ) show a composition bias toward low complexity. Basic and acidic residues predominate over residues 29-61 (EQRRGGGRGERGDRRGGRRGDRRNQERDSEWQE). In terms of domain architecture, S5 DRBM spans 59–122 (WQERVVQIRR…ADGKKHLVKV (64 aa)).

The protein belongs to the universal ribosomal protein uS5 family. Part of the 30S ribosomal subunit. Contacts proteins S4 and S8.

In terms of biological role, with S4 and S12 plays an important role in translational accuracy. Located at the back of the 30S subunit body where it stabilizes the conformation of the head with respect to the body. This is Small ribosomal subunit protein uS5 from Parasynechococcus marenigrum (strain WH8102).